The sequence spans 506 residues: DEAD-box ATP-dependent RNA helicase CshA (506 aa).

The Q motif signature appears at 2-30 (QNFKELGISDNTVQSLESMGFKEPTPIQK). Positions 33–203 (IPYALQGIDI…QQFMKSPKII (171 aa)) constitute a Helicase ATP-binding domain. 46-53 (AQTGTGKT) contacts ATP. The DEAD box motif lies at 150–153 (DEAD). Residues 214–375 (QIEEFYTIVK…LRPPHRKEVL (162 aa)) enclose the Helicase C-terminal domain. The interval 436–506 (EKPLSRKGRN…KGRTFADHQK (71 aa)) is disordered. Over residues 468-480 (KRSKGYSSKKKST) the composition is skewed to basic residues.

Belongs to the DEAD box helicase family. CshA subfamily. As to quaternary structure, oligomerizes, may be a member of the RNA degradosome.

The protein resides in the cytoplasm. It catalyses the reaction ATP + H2O = ADP + phosphate + H(+). DEAD-box RNA helicase possibly involved in RNA degradation. Unwinds dsRNA in both 5'- and 3'-directions, has RNA-dependent ATPase activity. This Staphylococcus aureus (strain MW2) protein is DEAD-box ATP-dependent RNA helicase CshA.